The sequence spans 145 residues: Neuromedin-S (145 aa).

An N-terminal signal peptide occupies residues 1–27; it reads MRSEKHLLPLPLLLAICCLGTLHLSSG. Propeptides lie at residues 28–89 and 92–117; these read FPQS…HEIY and FLFQ…AEYT. Asn136 bears the Asparagine amide mark. Residues 140–145 constitute a propeptide that is removed on maturation; that stretch reads VSINEH.

It belongs to the NmU family. In terms of tissue distribution, expressed by the skin glands.

It is found in the secreted. Stimulates uterine smooth muscle contraction (EC(50)=1.6 nM). Synthetic peptide NmS-17 induces calcium mobilization in CHO cells transfected with either human FM-3/GPR66 (EC(50)=0.085 nM) or FM-4/TGR-1 (EC(50)=0.231 nM) NmU/NmS receptors. The protein is Neuromedin-S (nms) of Bombina maxima (Giant fire-bellied toad).